Consider the following 540-residue polypeptide: MTAMKAIVWRLPKMPKIKITKTYEVTKITAILTLVGFIMGLEVPSLATFLTNKTFNEYFKYPTPLQQGLLMGSTPLGGIMGCFICCIMNDRFSRIYQFQSGIIIWNIVTLLNFCIWDILGLLICRMIKGMILGNFSILVASYANEVIPRGKRGSTMSYIQLCLTIGILVMHYLCIALSLWDSHFAFRIAWCIGIIPGLLFWMASYALPESYHWLVLHGKMSEAQEIQHNLAKKFNESQPRDAVPEMSKIELAGDFWIGVNDLDFSKKLPRGSFKPLILGMTLQLLVQFSGINIILGYITYICEIVGLEGNVKLFTSSIPYFINMVLSLLPITFIDYTSRKLITLLGGFPISGLLITIGALFVKYGQDTKPIDGNRSLVWSIGENPFVGGWILTLCFLIVGIFAMSLSSIPWVYTNEMLPSRVKVKGFAICVTFGWLGNFILTFLCPVMIERLKGTTFIIFGSLTFLISLSVLIWFPETKGMSIEDIDKFFEFESKEGTNLHGEKGIKTPDSNSNGGSTRSSQEGQLHKPIKLKSDEEMII.

Topologically, residues 1 to 29 are cytoplasmic; that stretch reads MTAMKAIVWRLPKMPKIKITKTYEVTKIT. A helical membrane pass occupies residues 30-50; it reads AILTLVGFIMGLEVPSLATFL. The Extracellular portion of the chain corresponds to 51-67; that stretch reads TNKTFNEYFKYPTPLQQ. N-linked (GlcNAc...) asparagine glycosylation is present at asparagine 52. A helical membrane pass occupies residues 68-88; the sequence is GLLMGSTPLGGIMGCFICCIM. Over 89 to 101 the chain is Cytoplasmic; the sequence is NDRFSRIYQFQSG. The helical transmembrane segment at 102 to 122 threads the bilayer; the sequence is IIIWNIVTLLNFCIWDILGLL. Over 123-126 the chain is Extracellular; it reads ICRM. The helical transmembrane segment at 127 to 147 threads the bilayer; sequence IKGMILGNFSILVASYANEVI. At 148-158 the chain is on the cytoplasmic side; it reads PRGKRGSTMSY. Residues 159-179 traverse the membrane as a helical segment; that stretch reads IQLCLTIGILVMHYLCIALSL. Topologically, residues 180-187 are extracellular; the sequence is WDSHFAFR. The helical transmembrane segment at 188–208 threads the bilayer; the sequence is IAWCIGIIPGLLFWMASYALP. Topologically, residues 209 to 275 are cytoplasmic; it reads ESYHWLVLHG…KKLPRGSFKP (67 aa). Residues 276–296 traverse the membrane as a helical segment; it reads LILGMTLQLLVQFSGINIILG. Topologically, residues 297 to 313 are extracellular; sequence YITYICEIVGLEGNVKL. The chain crosses the membrane as a helical span at residues 314–334; sequence FTSSIPYFINMVLSLLPITFI. Topologically, residues 335–341 are cytoplasmic; it reads DYTSRKL. The helical transmembrane segment at 342–362 threads the bilayer; the sequence is ITLLGGFPISGLLITIGALFV. Residues 363 to 385 lie on the Extracellular side of the membrane; sequence KYGQDTKPIDGNRSLVWSIGENP. The N-linked (GlcNAc...) asparagine glycan is linked to asparagine 374. A helical transmembrane segment spans residues 386–406; it reads FVGGWILTLCFLIVGIFAMSL. Residues 407-428 are Cytoplasmic-facing; the sequence is SSIPWVYTNEMLPSRVKVKGFA. Residues 429–449 traverse the membrane as a helical segment; it reads ICVTFGWLGNFILTFLCPVMI. The Extracellular segment spans residues 450–455; it reads ERLKGT. A helical transmembrane segment spans residues 456-476; it reads TFIIFGSLTFLISLSVLIWFP. Residues 477 to 540 lie on the Cytoplasmic side of the membrane; it reads ETKGMSIEDI…KLKSDEEMII (64 aa). The disordered stretch occupies residues 499–540; sequence NLHGEKGIKTPDSNSNGGSTRSSQEGQLHKPIKLKSDEEMII. The segment covering 509 to 524 has biased composition (polar residues); that stretch reads PDSNSNGGSTRSSQEG.

It belongs to the major facilitator superfamily. Sugar transporter (TC 2.A.1.1) family.

Its subcellular location is the membrane. This Saccharomyces cerevisiae (strain ATCC 204508 / S288c) (Baker's yeast) protein is Probable metabolite transport protein YFL040W.